Reading from the N-terminus, the 962-residue chain is Glycine dehydrogenase (decarboxylating) (962 aa).

The residue at position 709 (Lys709) is an N6-(pyridoxal phosphate)lysine.

It belongs to the GcvP family. In terms of assembly, the glycine cleavage system is composed of four proteins: P, T, L and H. Pyridoxal 5'-phosphate is required as a cofactor.

It carries out the reaction N(6)-[(R)-lipoyl]-L-lysyl-[glycine-cleavage complex H protein] + glycine + H(+) = N(6)-[(R)-S(8)-aminomethyldihydrolipoyl]-L-lysyl-[glycine-cleavage complex H protein] + CO2. Its function is as follows. The glycine cleavage system catalyzes the degradation of glycine. The P protein binds the alpha-amino group of glycine through its pyridoxal phosphate cofactor; CO(2) is released and the remaining methylamine moiety is then transferred to the lipoamide cofactor of the H protein. This is Glycine dehydrogenase (decarboxylating) from Shewanella sediminis (strain HAW-EB3).